We begin with the raw amino-acid sequence, 399 residues long: Tetracycline resistance protein, class A (399 aa).

Transmembrane regions (helical) follow at residues 7–29 (LIVI…PVLP), 44–66 (HYGI…LGAL), 73–95 (RPVL…TAPF), 99–121 (LYIG…AYIA), 133–155 (FGFM…GLMG), 160–182 (HAPF…FLLP), 203–225 (FRWA…MQLV), 245–267 (ATTI…AMIT), 279–298 (ALML…AFAT), 302–324 (MAFP…QAML), 336–358 (LQGS…FTAI), and 368–390 (GWAW…RGLW).

Belongs to the major facilitator superfamily. TCR/Tet family.

Its subcellular location is the cell inner membrane. In terms of biological role, resistance to tetracycline by an active tetracycline efflux. This is an energy-dependent process that decreases the accumulation of the antibiotic in whole cells. This protein functions as a metal-tetracycline/H(+) antiporter. This chain is Tetracycline resistance protein, class A (tetA), found in Escherichia coli.